A 397-amino-acid chain; its full sequence is Torsin-3A (397 aa).

Positions 1 to 25 (MLRGPWRQLWLFFLLLLPGAPEPRG) are cleaved as a signal peptide. N-linked (GlcNAc...) asparagine glycosylation is present at Asn-122. 167-174 (GWSGTGKN) is an ATP binding site.

It belongs to the ClpA/ClpB family. Torsin subfamily. May not form homohexamers. In terms of processing, N-glycosylated. In terms of tissue distribution, ubiquitously expressed. Highest expression in stomach, salivary glands and lymph nodes. Isoform 2 is expressed in placenta.

Its subcellular location is the cytoplasm. It is found in the endoplasmic reticulum lumen. The sequence is that of Torsin-3A (TOR3A) from Homo sapiens (Human).